The primary structure comprises 257 residues: ATP synthase subunit a (257 aa).

A propeptide spans 1–4 (MFIT) (removed in mature form). A run of 8 helical transmembrane segments spans residues 27 to 47 (FSNF…LAII), 58 to 78 (IVPQ…LNLV), 93 to 113 (YFPF…LRLI), 122 to 142 (QLIF…ILGL), 149 to 169 (VFGL…LVLI), 189 to 209 (IIAG…FMGL), 214 to 234 (FIIG…EFGI), and 236 to 256 (FIQA…SLNL).

It belongs to the ATPase A chain family. In terms of assembly, F-type ATPases have 2 components, CF(1) - the catalytic core - and CF(0) - the membrane proton channel. CF(1) has five subunits: alpha(3), beta(3), gamma(1), delta(1), epsilon(1). CF(0) has three main subunits: a, b and c.

The protein localises to the mitochondrion inner membrane. In terms of biological role, mitochondrial membrane ATP synthase (F(1)F(0) ATP synthase or Complex V) produces ATP from ADP in the presence of a proton gradient across the membrane which is generated by electron transport complexes of the respiratory chain. F-type ATPases consist of two structural domains, F(1) - containing the extramembraneous catalytic core and F(0) - containing the membrane proton channel, linked together by a central stalk and a peripheral stalk. During catalysis, ATP synthesis in the catalytic domain of F(1) is coupled via a rotary mechanism of the central stalk subunits to proton translocation. Key component of the proton channel; it may play a direct role in the translocation of protons across the membrane. The chain is ATP synthase subunit a (atp6) from Schizosaccharomyces pombe (strain 972 / ATCC 24843) (Fission yeast).